Here is a 174-residue protein sequence, read N- to C-terminus: Co-chaperone protein HscB homolog (174 aa).

The J domain occupies 2–74 (NYFELFKFPP…IRRAEHMLSL (73 aa)).

The protein belongs to the HscB family. As to quaternary structure, interacts with HscA and stimulates its ATPase activity.

Functionally, co-chaperone involved in the maturation of iron-sulfur cluster-containing proteins. Seems to help targeting proteins to be folded toward HscA. In Shewanella baltica (strain OS195), this protein is Co-chaperone protein HscB homolog.